The sequence spans 313 residues: Probable WRKY transcription factor 41 (313 aa).

The WRKY DNA-binding region spans 135 to 203 (GLEGPHDDIF…YRGTHTCSQG (69 aa)).

It belongs to the WRKY group III family.

It is found in the nucleus. Functionally, transcription factor. Interacts specifically with the W box (5'-(T)TGAC[CT]-3'), a frequently occurring elicitor-responsive cis-acting element. The chain is Probable WRKY transcription factor 41 (WRKY41) from Arabidopsis thaliana (Mouse-ear cress).